The chain runs to 403 residues: S-adenosylmethionine synthase (403 aa).

H15 serves as a coordination point for ATP. Residue D17 coordinates Mg(2+). E43 lines the K(+) pocket. Residues E56 and Q99 each coordinate L-methionine. Positions Q99–R109 are flexible loop. ATP is bound by residues D166–K168, K232–F233, D241, R247–K248, A264, and K268. Position 241 (D241) interacts with L-methionine. Position 272 (K272) interacts with L-methionine.

It belongs to the AdoMet synthase family. In terms of assembly, homotetramer; dimer of dimers. It depends on Mg(2+) as a cofactor. Requires K(+) as cofactor.

The protein localises to the cytoplasm. It catalyses the reaction L-methionine + ATP + H2O = S-adenosyl-L-methionine + phosphate + diphosphate. It functions in the pathway amino-acid biosynthesis; S-adenosyl-L-methionine biosynthesis; S-adenosyl-L-methionine from L-methionine: step 1/1. Catalyzes the formation of S-adenosylmethionine (AdoMet) from methionine and ATP. The overall synthetic reaction is composed of two sequential steps, AdoMet formation and the subsequent tripolyphosphate hydrolysis which occurs prior to release of AdoMet from the enzyme. This is S-adenosylmethionine synthase from Stenotrophomonas maltophilia (strain K279a).